Reading from the N-terminus, the 126-residue chain is Large ribosomal subunit protein bL12 (126 aa).

The protein belongs to the bacterial ribosomal protein bL12 family. In terms of assembly, homodimer. Part of the ribosomal stalk of the 50S ribosomal subunit. Forms a multimeric L10(L12)X complex, where L10 forms an elongated spine to which 2 to 4 L12 dimers bind in a sequential fashion. Binds GTP-bound translation factors.

Its function is as follows. Forms part of the ribosomal stalk which helps the ribosome interact with GTP-bound translation factors. Is thus essential for accurate translation. This chain is Large ribosomal subunit protein bL12, found in Nitrosococcus oceani (strain ATCC 19707 / BCRC 17464 / JCM 30415 / NCIMB 11848 / C-107).